The sequence spans 628 residues: Carbon monoxide dehydrogenase 1 (628 aa).

The [4Fe-4S] cluster site is built by C44, C52, C53, C56, C61, and C75. [Ni-4Fe-5S] cluster contacts are provided by H266, C302, C340, C448, C478, and C519.

It belongs to the Ni-containing carbon monoxide dehydrogenase family. As to quaternary structure, homodimer. It depends on [4Fe-4S] cluster as a cofactor. [Ni-4Fe-5S] cluster is required as a cofactor.

It catalyses the reaction CO + 2 oxidized [2Fe-2S]-[ferredoxin] + H2O = 2 reduced [2Fe-2S]-[ferredoxin] + CO2 + 2 H(+). CODH oxidizes carbon monoxide coupled, via CooF, to the reduction of a hydrogen cation by a hydrogenase (possibly CooH). The polypeptide is Carbon monoxide dehydrogenase 1 (cooS1) (Methanosarcina mazei (strain ATCC BAA-159 / DSM 3647 / Goe1 / Go1 / JCM 11833 / OCM 88) (Methanosarcina frisia)).